The chain runs to 607 residues: Elongation factor 4 (607 aa).

Residues 11 to 193 (SKIRNFSIIA…QIVEKVPAPT (183 aa)) enclose the tr-type G domain. Residues 23–28 (DHGKST) and 140–143 (NKID) each bind GTP.

This sequence belongs to the TRAFAC class translation factor GTPase superfamily. Classic translation factor GTPase family. LepA subfamily.

It is found in the cell membrane. It catalyses the reaction GTP + H2O = GDP + phosphate + H(+). In terms of biological role, required for accurate and efficient protein synthesis under certain stress conditions. May act as a fidelity factor of the translation reaction, by catalyzing a one-codon backward translocation of tRNAs on improperly translocated ribosomes. Back-translocation proceeds from a post-translocation (POST) complex to a pre-translocation (PRE) complex, thus giving elongation factor G a second chance to translocate the tRNAs correctly. Binds to ribosomes in a GTP-dependent manner. In Bacillus anthracis (strain A0248), this protein is Elongation factor 4.